Reading from the N-terminus, the 433-residue chain is MTASAKPVSSVDSFFSATLAEADPEIAAAIRGELGRQRHEIELIASENIVSRAVLEAQGSVMTNKYAEGYPGARYYGGCEWVDVAENLAIDRAKKLFGANFANVQPNSGSQMNQAVFLALLQPGDTFMGLDLAAGGHLTHGSPVNMSGKWFKAAHYTVRRDDHLIDMDAVAKQAEEVKPKLIIAGGSAYSRPWDFKRFREIADSVGAYLLVDMAHFAGLVAGGVHASPVPYAHITTTTTHKSLRGPRGGLMLWNDEQFTKKFNSAIFPGLQGGPLMHVIAAKAVAFAEALRPEFKAYAKNVVENAKALAESLRAQGFDIVSGGTDNHLMLVDLRPKGLKGNVSEKALVRAAITCNKNGIPFDPEKPFVTSGLRLGTPAATTRGFGVAEFQQVGSLIAEVLNAIAQGPDGSAPLVEAAVKEKVKALTDRFPIYQ.

Residues Leu132 and 136–138 (GHL) each bind (6S)-5,6,7,8-tetrahydrofolate. Lys241 carries the N6-(pyridoxal phosphate)lysine modification.

It belongs to the SHMT family. As to quaternary structure, homodimer. The cofactor is pyridoxal 5'-phosphate.

The protein resides in the cytoplasm. The catalysed reaction is (6R)-5,10-methylene-5,6,7,8-tetrahydrofolate + glycine + H2O = (6S)-5,6,7,8-tetrahydrofolate + L-serine. It functions in the pathway one-carbon metabolism; tetrahydrofolate interconversion. It participates in amino-acid biosynthesis; glycine biosynthesis; glycine from L-serine: step 1/1. Functionally, catalyzes the reversible interconversion of serine and glycine with tetrahydrofolate (THF) serving as the one-carbon carrier. This reaction serves as the major source of one-carbon groups required for the biosynthesis of purines, thymidylate, methionine, and other important biomolecules. Also exhibits THF-independent aldolase activity toward beta-hydroxyamino acids, producing glycine and aldehydes, via a retro-aldol mechanism. This chain is Serine hydroxymethyltransferase, found in Bradyrhizobium sp. (strain ORS 278).